The sequence spans 124 residues: Snaclec rhodocetin subunit delta (124 aa).

3 disulfides stabilise this stretch: cysteine 1–cysteine 12, cysteine 29–cysteine 120, and cysteine 95–cysteine 112. Residues 8–121 (YNGYCYRVFS…CEKTVSFVCK (114 aa)) enclose the C-type lectin domain.

It belongs to the snaclec family. Heterotetramer of subunit alpha, beta, gamma and delta; only the gamma and the delta subunits are disulfide-linked. Alpha-beta heterodimer and gamma-delta heterodimer associate orthogonally, giving a cruciform conformation. This heterotetramer may covalently dimerizes thanks to the gamma subunit. In terms of tissue distribution, expressed by the venom gland.

It localises to the secreted. In terms of biological role, potent inhibitor of collagen-induced platelet aggregation. It acts by binding to the integrin alpha2A domain and blocks collagen binding to integrin alpha-2/beta-1 (ITGA2/ITGB1). The gamma/delta subunits mainly contribute to this activity. This Calloselasma rhodostoma (Malayan pit viper) protein is Snaclec rhodocetin subunit delta.